We begin with the raw amino-acid sequence, 214 residues long: Ependymin (214 aa).

The first 20 residues, 1–20 (MHTVKLLCVVFSCLCAVAWA), serve as a signal peptide directing secretion. N-linked (GlcNAc...) asparagine glycans are attached at residues N70 and N93.

The protein belongs to the ependymin family. As to quaternary structure, forms disulfide-linked dimers. Binds calcium through the terminal sialic acids.

It is found in the secreted. Functionally, may play a role in neural plasticity. May be involved during axon regeneration. The chain is Ependymin (epd) from Notemigonus crysoleucas (Golden shiner).